The primary structure comprises 190 residues: CASP-like protein 1U3 (190 aa).

Over 1-24 (MNGATVQPSYKEAGPVRYHPMHDC) the chain is Cytoplasmic. The helical transmembrane segment at 25-45 (LSLILRLLTLGATIAAIVAML) threads the bilayer. The Extracellular portion of the chain corresponds to 46–70 (KSTQTVPTLLGPHTARWKDFPAFEW). The helical transmembrane segment at 71–91 (FVIGNSIVLVYAALGTLAACL) threads the bilayer. Residues 92-113 (SLFTRRGPLSYTKTAWLTFLCD) are Cytoplasmic-facing. The helical transmembrane segment at 114-134 (FICSCALISAGSTALGVAWIG) threads the bilayer. Topologically, residues 135–158 (KHGQHSAFWNAVCPTVDRFCDYVQ) are extracellular. The chain crosses the membrane as a helical span at residues 159–179 (GALIATLCGFIFQALSTVIAA). The Cytoplasmic portion of the chain corresponds to 180–190 (SALHNLATHRH).

Belongs to the Casparian strip membrane proteins (CASP) family. Homodimer and heterodimers.

It is found in the cell membrane. This chain is CASP-like protein 1U3, found in Physcomitrium patens (Spreading-leaved earth moss).